Reading from the N-terminus, the 286-residue chain is Flagellar filament 31.3 kDa core protein (286 aa).

The protein belongs to the bacterial flagellin family. In terms of assembly, the core of the flagellum consists of several antigenically related polypeptides. In terms of processing, glycosylated. Glycosylation is not essential for motility.

It localises to the periplasmic flagellum. The protein resides in the periplasm. Component of the core of the flagella. The polypeptide is Flagellar filament 31.3 kDa core protein (flaB2) (Treponema maltophilum).